Reading from the N-terminus, the 370-residue chain is Actin-related protein 2/3 complex subunit 1A-A (370 aa).

6 WD repeats span residues 6-45 (FLLE…WVKG), 50-89 (EHNG…WKPT), 140-179 (PIRS…VDEK), 202-241 (SSGG…SVSQ), 244-284 (TEFL…TFVS), and 322-365 (LHQN…SYIQ).

This sequence belongs to the WD repeat ARPC1 family. Component of the Arp2/3 complex.

It localises to the cytoplasm. Its subcellular location is the cytoskeleton. The protein localises to the nucleus. Functionally, probably functions as a component of the Arp2/3 complex which is involved in regulation of actin polymerization and together with an activating nucleation-promoting factor (NPF) mediates the formation of branched actin networks. In addition to its role in the cytoplasmic cytoskeleton, the Arp2/3 complex also promotes actin polymerization in the nucleus, thereby regulating gene transcription and repair of damaged DNA. The polypeptide is Actin-related protein 2/3 complex subunit 1A-A (arpc1a-a) (Xenopus laevis (African clawed frog)).